Reading from the N-terminus, the 585-residue chain is MNIFKNFEKKIKKSIELSDIKGKNGEDLDLSKITVDPPRDSSHGHLSTNAAMVLAKSIGLSPRALADKIIELLKNDISIENIDVAGPGFINIKLTKLFWQDAVKYMLELGLSYGRIPMGQGKRINVEYVSANPTGPMHVGHCRGAVVGDVLSNLLQFAGYNITKEYYINDAGQQIEVLAHSVLLRYREALGQKINEIPEGLYPGEYLIPLGQALAQEFGDQLLTMDRDEALSIVKERAIHTMMSMIREDLAALNIYHDIFFSERMLYADNARAIRNTINDLTLNGYIYKGKLPPPKGQNIEDWEPSEQTLFRSTNVGDDQDRVLIKSDGSYTYFAADVAYFRDKFNRHFDEMIYILGADHAGYVKRLEAMAKAISGNKAKLSVFLCQLVKLFRNGQPVRMSKRAGSFVTLRDVVEEVGRDPVRFMMLYRKCEAPLDFDFAKVTEQSKDNPIFYVQYANARCHSVFRQAQEVLHIESFSNDILITYLHRLIDDNEILLIRKLSEYPRIIEQAVVHKEPHRLAFYLYDLASCFHTHWNKGSENLNLRFIQPHDKELSFARLGLIQAVINILSSGLSIIGVEAPIEMR.

Positions 131–141 (ANPTGPMHVGH) match the 'HIGH' region motif.

Belongs to the class-I aminoacyl-tRNA synthetase family. In terms of assembly, monomer.

It localises to the cytoplasm. The catalysed reaction is tRNA(Arg) + L-arginine + ATP = L-arginyl-tRNA(Arg) + AMP + diphosphate. The chain is Arginine--tRNA ligase from Bartonella tribocorum (strain CIP 105476 / IBS 506).